We begin with the raw amino-acid sequence, 544 residues long: Serine/threonine-protein kinase PAK 1 (544 aa).

The segment at 1–77 (MSNNGLDIQD…KEKERPEISL (77 aa)) is disordered. N-acetylserine is present on serine 2. Position 21 is a phosphoserine; by PKB and autocatalysis (serine 21). Residues 68–77 (KEKERPEISL) show a composition bias toward basic and acidic residues. The interval 70–140 (KERPEISLPS…YNSKKTSNSQ (71 aa)) is autoregulatory region. The CRIB domain maps to 75-88 (ISLPSDFEHTIHVG). The segment at 75-105 (ISLPSDFEHTIHVGFDAVTGEFTGMPEQWAR) is GTPase-binding. A Phosphothreonine; by OXSR1 modification is found at threonine 84. Serine 115 is subject to Phosphoserine. 2 positions are modified to phosphotyrosine: tyrosine 131 and tyrosine 142. A phosphoserine; by autocatalysis mark is found at serine 144 and serine 149. Tyrosine 153 bears the Phosphotyrosine; by JAK2 mark. The tract at residues 161–193 (VKAVSETPAVPPVSEDEDDDDDGTPPPVIAPRP) is disordered. At serine 174 the chain carries Phosphoserine. Over residues 174–183 (SEDEDDDDDG) the composition is skewed to acidic residues. Threonine 184 is modified (phosphothreonine). Serine 198 carries the post-translational modification Phosphoserine; by autocatalysis. Residue tyrosine 200 is modified to Phosphotyrosine; by JAK2. A Phosphoserine; by autocatalysis modification is found at serine 203. Phosphothreonine occurs at positions 211 and 218. The disordered stretch occupies residues 212–250 (PTRDVATSPISPTENNTTPPDALTRNTEKQKKKPKMSDE). Phosphoserine is present on residues serine 219 and serine 222. Positions 219-230 (SPISPTENNTTP) are enriched in polar residues. Threonine 224, threonine 228, and threonine 229 each carry phosphothreonine. Residues 269–520 (YTRFEKIGQG…AKELLQHQFL (252 aa)) form the Protein kinase domain. Residue 275–283 (IGQGASGTV) coordinates ATP. The residue at position 284 (tyrosine 284) is a Phosphotyrosine; by JAK2. Lysine 298 lines the ATP pocket. Aspartate 388 (proton acceptor) is an active-site residue. Position 422 is a phosphothreonine; by autocatalysis, BRSK2 and PDPK1 (threonine 422).

Belongs to the protein kinase superfamily. STE Ser/Thr protein kinase family. STE20 subfamily. In terms of assembly, homodimer in its autoinhibited state. Active as monomer. Interacts with GIT1. Component of cytoplasmic complexes, which also contains PXN, ARHGEF7 and GIT1. Interacts with NISCH. Interacts with DVL1; mediates the formation of a DVL1, MUSK and PAK1 ternary complex involved in AChR clustering. Binds to the caspase-cleaved p110 isoform of CDC2L1 and CDC2L2, p110C, but not the full-length proteins. Interacts with ARHGEF7. Interacts tightly with GTP-bound but not GDP-bound CDC42/P21 and RAC1. Probably found in a ternary complex composed of DSCAM, PAK1 and RAC1. Interacts with DSCAM (via cytoplasmic domain); the interaction is direct and enhanced in presence of RAC1. Interacts with SCRIB. Interacts with PDPK1. Interacts (via kinase domain) with RAF1. Interacts with NCK1 and NCK2. Interacts with TBCB. Interacts with BRSK2. Interacts with SNAI1. Interacts with CIB1 (via N-terminal region); the interaction is direct, promotes PAK1 activity and occurs in a calcium-dependent manner. Interacts with INPP5K. Interacts with gamma-tubulin. Interacts with RHOU; the interaction promotes PAK1 activation. Mg(2+) serves as cofactor. In terms of processing, autophosphorylated in trans, meaning that in a dimer, one kinase molecule phosphorylates the other one. Activated by autophosphorylation at Thr-422 in response to a conformation change, triggered by interaction with GTP-bound CDC42 or RAC1. Activated by phosphorylation at Thr-422 by BRSK2 and by PDPK1. Phosphorylated by JAK2 in response to PRL; this increases PAK1 kinase activity. Phosphorylated at Ser-21 by PKB/AKT; this reduces interaction with NCK1 and association with focal adhesion sites. Upon DNA damage, phosphorylated at Thr-211 and translocates to the nucleoplasm. Phosphorylated at tyrosine residues, which can be enhanced by NTN1.

The protein resides in the cytoplasm. Its subcellular location is the cell junction. It is found in the focal adhesion. The protein localises to the cell projection. It localises to the lamellipodium. The protein resides in the cell membrane. Its subcellular location is the ruffle membrane. It is found in the invadopodium. The protein localises to the nucleus. It localises to the nucleoplasm. The protein resides in the chromosome. Its subcellular location is the cytoskeleton. It is found in the microtubule organizing center. The protein localises to the centrosome. The enzyme catalyses L-seryl-[protein] + ATP = O-phospho-L-seryl-[protein] + ADP + H(+). It carries out the reaction L-threonyl-[protein] + ATP = O-phospho-L-threonyl-[protein] + ADP + H(+). Its activity is regulated as follows. Phosphorylation of Thr-84 by OXSR1 inhibits activation. Activated by binding small G proteins. Binding of GTP-bound CDC42 or RAC1 to the autoregulatory region releases monomers from the autoinhibited dimer, and enables activation by phosphorylation of Thr-422. In terms of biological role, protein kinase involved in intracellular signaling pathways downstream of integrins and receptor-type kinases that plays an important role in cytoskeleton dynamics, in cell adhesion, migration, proliferation, apoptosis, mitosis, and in vesicle-mediated transport processes. Can directly phosphorylate BAD and protects cells against apoptosis. Activated by interaction with CDC42 and RAC1. Functions as a GTPase effector that links the Rho-related GTPases CDC42 and RAC1 to the JNK MAP kinase pathway. Phosphorylates and activates MAP2K1, and thereby mediates activation of downstream MAP kinases. Involved in the reorganization of the actin cytoskeleton, actin stress fibers and of focal adhesion complexes. Phosphorylates the tubulin chaperone TBCB and thereby plays a role in the regulation of microtubule biogenesis and organization of the tubulin cytoskeleton. Plays a role in the regulation of insulin secretion in response to elevated glucose levels. Part of a ternary complex that contains PAK1, DVL1 and MUSK that is important for MUSK-dependent regulation of AChR clustering during the formation of the neuromuscular junction (NMJ). Activity is inhibited in cells undergoing apoptosis, potentially due to binding of CDC2L1 and CDC2L2. Phosphorylates MYL9/MLC2. Phosphorylates RAF1 at 'Ser-338' and 'Ser-339' resulting in: activation of RAF1, stimulation of RAF1 translocation to mitochondria, phosphorylation of BAD by RAF1, and RAF1 binding to BCL2. Phosphorylates SNAI1 at 'Ser-246' promoting its transcriptional repressor activity by increasing its accumulation in the nucleus. In podocytes, promotes NR3C2 nuclear localization. Required for atypical chemokine receptor ACKR2-induced phosphorylation of LIMK1 and cofilin (CFL1) and for the up-regulation of ACKR2 from endosomal compartment to cell membrane, increasing its efficiency in chemokine uptake and degradation. In synapses, seems to mediate the regulation of F-actin cluster formation performed by SHANK3, maybe through CFL1 phosphorylation and inactivation. Plays a role in RUFY3-mediated facilitating gastric cancer cells migration and invasion. In response to DNA damage, phosphorylates MORC2 which activates its ATPase activity and facilitates chromatin remodeling. In neurons, plays a crucial role in regulating GABA(A) receptor synaptic stability and hence GABAergic inhibitory synaptic transmission through its role in F-actin stabilization. In hippocampal neurons, necessary for the formation of dendritic spines and excitatory synapses; this function is dependent on kinase activity and may be exerted by the regulation of actomyosin contractility through the phosphorylation of myosin II regulatory light chain (MLC). Along with GIT1, positively regulates microtubule nucleation during interphase. Phosphorylates FXR1, promoting its localization to stress granules and activity. Phosphorylates ILK on 'Thr-173' and 'Ser-246', promoting nuclear export of ILK. This chain is Serine/threonine-protein kinase PAK 1, found in Bos taurus (Bovine).